The following is a 193-amino-acid chain: Phosphoheptose isomerase (193 aa).

In terms of domain architecture, SIS spans 37-193 (LAASFKADGK…QLIEKEMASV (157 aa)). Residue 52 to 54 (NGG) coordinates substrate. His-61 and Glu-65 together coordinate Zn(2+). Residues Glu-65, 93 to 94 (ND), 119 to 121 (STS), Ser-124, and Gln-172 each bind substrate. Zn(2+) contacts are provided by Gln-172 and His-180.

The protein belongs to the SIS family. GmhA subfamily. Homotetramer. It depends on Zn(2+) as a cofactor.

It is found in the cytoplasm. The enzyme catalyses 2 D-sedoheptulose 7-phosphate = D-glycero-alpha-D-manno-heptose 7-phosphate + D-glycero-beta-D-manno-heptose 7-phosphate. Its pathway is carbohydrate biosynthesis; D-glycero-D-manno-heptose 7-phosphate biosynthesis; D-glycero-alpha-D-manno-heptose 7-phosphate and D-glycero-beta-D-manno-heptose 7-phosphate from sedoheptulose 7-phosphate: step 1/1. Its function is as follows. Catalyzes the isomerization of sedoheptulose 7-phosphate in D-glycero-D-manno-heptose 7-phosphate. This chain is Phosphoheptose isomerase, found in Edwardsiella ictaluri (strain 93-146).